A 342-amino-acid polypeptide reads, in one-letter code: Eukaryotic translation initiation factor 3 subunit F (342 aa).

The 137-residue stretch at 30–166 (VAIQPQAVFS…SRTYISAPIG (137 aa)) folds into the MPN domain. The interval 310 to 342 (TDALAGDGQKDGGDRKQGGDRRNKGRQQRTQEA) is disordered. Residues 317-331 (GQKDGGDRKQGGDRR) are compositionally biased toward basic and acidic residues.

This sequence belongs to the eIF-3 subunit F family. In terms of assembly, component of the eukaryotic translation initiation factor 3 (eIF-3) complex.

It is found in the cytoplasm. Its function is as follows. Component of the eukaryotic translation initiation factor 3 (eIF-3) complex, which is involved in protein synthesis of a specialized repertoire of mRNAs and, together with other initiation factors, stimulates binding of mRNA and methionyl-tRNAi to the 40S ribosome. The eIF-3 complex specifically targets and initiates translation of a subset of mRNAs involved in cell proliferation. This Phaeosphaeria nodorum (strain SN15 / ATCC MYA-4574 / FGSC 10173) (Glume blotch fungus) protein is Eukaryotic translation initiation factor 3 subunit F.